Reading from the N-terminus, the 504-residue chain is Probable cytochrome P450 305a1 (504 aa).

Position 450 (Cys-450) interacts with heme.

Belongs to the cytochrome P450 family. Heme serves as cofactor.

It localises to the endoplasmic reticulum membrane. The protein resides in the microsome membrane. May be involved in the metabolism of insect hormones and in the breakdown of synthetic insecticides. The protein is Probable cytochrome P450 305a1 (Cyp305a1) of Drosophila melanogaster (Fruit fly).